The sequence spans 92 residues: Small ribosomal subunit protein uS19 (92 aa).

This sequence belongs to the universal ribosomal protein uS19 family.

In terms of biological role, protein S19 forms a complex with S13 that binds strongly to the 16S ribosomal RNA. This Methylobacterium radiotolerans (strain ATCC 27329 / DSM 1819 / JCM 2831 / NBRC 15690 / NCIMB 10815 / 0-1) protein is Small ribosomal subunit protein uS19.